The primary structure comprises 380 residues: Cytochrome b (380 aa).

The next 4 membrane-spanning stretches (helical) occupy residues 33–53, 77–98, 113–133, and 178–198; these read FGSL…FLAM, WLIR…YLHI, WNIG…GYVL, and FFAF…IHLI. The heme b site is built by His-83 and His-97. Heme b-binding residues include His-182 and His-196. His-201 provides a ligand contact to a ubiquinone. 4 consecutive transmembrane segments (helical) span residues 226 to 246, 288 to 308, 320 to 340, and 347 to 367; these read YKDL…ALFS, LGGV…PVLH, FSQF…WIGG, and FIII…ILVP.

It belongs to the cytochrome b family. The cytochrome bc1 complex contains 3 respiratory subunits (MT-CYB, CYC1 and UQCRFS1), 2 core proteins (UQCRC1 and UQCRC2) and probably 6 low-molecular weight proteins. The cofactor is heme b.

It localises to the mitochondrion inner membrane. In terms of biological role, component of the ubiquinol-cytochrome c reductase complex (complex III or cytochrome b-c1 complex) that is part of the mitochondrial respiratory chain. The b-c1 complex mediates electron transfer from ubiquinol to cytochrome c. Contributes to the generation of a proton gradient across the mitochondrial membrane that is then used for ATP synthesis. This Astronotus ocellatus (Oscar) protein is Cytochrome b (mt-cyb).